Consider the following 572-residue polypeptide: Beta-fructofuranosidase, insoluble isoenzyme CWINV5 (572 aa).

Residues 1–23 (MANIVWCNIAMFLLVSLFLTDDA) form the signal peptide. Substrate is bound by residues 54-57 (WMND) and Gln73. Asp57 is a catalytic residue. N-linked (GlcNAc...) asparagine glycosylation is present at Asn84. 118 to 119 (WS) provides a ligand contact to substrate. N-linked (GlcNAc...) asparagine glycans are attached at residues Asn152 and Asn179. Substrate is bound by residues 184-185 (RD) and Glu239. N-linked (GlcNAc...) asparagine glycans are attached at residues Asn333 and Asn438. A disulfide bond links Cys434 and Cys481.

This sequence belongs to the glycosyl hydrolase 32 family. Expressed in flowers, and, to a lower extent, in leaves.

It localises to the secreted. The protein resides in the extracellular space. Its subcellular location is the apoplast. It is found in the cell wall. The catalysed reaction is Hydrolysis of terminal non-reducing beta-D-fructofuranoside residues in beta-D-fructofuranosides.. In Arabidopsis thaliana (Mouse-ear cress), this protein is Beta-fructofuranosidase, insoluble isoenzyme CWINV5 (CWINV5).